The following is a 537-amino-acid chain: Glucans biosynthesis protein D 2 (537 aa).

A signal peptide (tat-type signal) is located at residues 1–28 (MVTRRHLLASASLSATLAALGITPEALA).

This sequence belongs to the OpgD/OpgG family. Predicted to be exported by the Tat system. The position of the signal peptide cleavage has not been experimentally proven.

It is found in the periplasm. It participates in glycan metabolism; osmoregulated periplasmic glucan (OPG) biosynthesis. In terms of biological role, probably involved in the control of the structural glucose backbone of osmoregulated periplasmic glucans (OPGs). This Ralstonia nicotianae (strain ATCC BAA-1114 / GMI1000) (Ralstonia solanacearum) protein is Glucans biosynthesis protein D 2 (opgD2).